Consider the following 69-residue polypeptide: Alpha-elapitoxin-Lc2c (69 aa).

Intrachain disulfides connect Cys3–Cys20, Cys13–Cys41, Cys45–Cys56, and Cys57–Cys62.

It belongs to the three-finger toxin family. Long-chain subfamily. Type II alpha-neurotoxin sub-subfamily. In terms of tissue distribution, expressed by the venom gland.

Its subcellular location is the secreted. Its function is as follows. Binds with high affinity to muscular nicotinic acetylcholine receptors (nAChRs), whereas it binds with a low affinity to neuronal alpha-7/CHRNA7 nAChRs. In Laticauda colubrina (Yellow-lipped sea krait), this protein is Alpha-elapitoxin-Lc2c.